The chain runs to 255 residues: tRNA (guanine-N(1)-)-methyltransferase (255 aa).

S-adenosyl-L-methionine contacts are provided by residues Gly-114 and 134-139; that span reads IGDYIL.

The protein belongs to the RNA methyltransferase TrmD family. As to quaternary structure, homodimer.

It localises to the cytoplasm. The enzyme catalyses guanosine(37) in tRNA + S-adenosyl-L-methionine = N(1)-methylguanosine(37) in tRNA + S-adenosyl-L-homocysteine + H(+). In terms of biological role, specifically methylates guanosine-37 in various tRNAs. This Blochmanniella pennsylvanica (strain BPEN) protein is tRNA (guanine-N(1)-)-methyltransferase.